Consider the following 545-residue polypeptide: MAKRIIYNEQARRALERGIDILAESVAVTLGPKGRNVVLEKKFGAPQIINDGVTIAKEIELEDHIENTGVALIRQAASKTNDAAGDGTTTATVLAHAMVKAGLRNVAAGANAITLKKGIDKATDFLVKKIQEQAKPISDSNAIAQCGTIAAGNDEEVGQMIADAMDKVGKEGVISLEEGKSMETELEVTEGMRFDKGYISPYFATDTERMEAVLDEPYILLTDKKIGLVQDLVPVLEQIAKTGKPLLIVAEDIEKEALATLVVNRLRGVLNVAAVKAPGFGDRRKAMLEDMAVLTNGQLITEDAGLKLENATLDMLGTSRRVTINKDTTTIVAEGNEAAVQARCEQIKKQMDETDSTYDKEKLQERLAKLAGGVAVVKVGAATETEMKDKKLRLEDAINATKAAVEEGIVPGGGTTLAHLASEVHSWAASSLSGEELIGANIVEAALTAPLMRIAENAGANGAVIAEHVKSKPLNDGYNAASGEYVDMLSAGIVDPAKVTRSGLQNASSIAGMVLTTECIVADLPEKKDVASGGAGGGMGGDFDY.

ATP is bound by residues 29-32 (TLGP), 86-90 (DGTTT), glycine 413, 479-481 (NAA), and aspartate 495.

It belongs to the chaperonin (HSP60) family. In terms of assembly, forms a cylinder of 14 subunits composed of two heptameric rings stacked back-to-back. Interacts with the co-chaperonin GroES.

The protein localises to the cytoplasm. It carries out the reaction ATP + H2O + a folded polypeptide = ADP + phosphate + an unfolded polypeptide.. Functionally, together with its co-chaperonin GroES, plays an essential role in assisting protein folding. The GroEL-GroES system forms a nano-cage that allows encapsulation of the non-native substrate proteins and provides a physical environment optimized to promote and accelerate protein folding. This Prochlorococcus marinus (strain SARG / CCMP1375 / SS120) protein is Chaperonin GroEL 2.